The chain runs to 192 residues: uncharacterized protein (192 aa).

The first 17 residues, 1-17 (MFLHLILLAGLAPVVYL), serve as a signal peptide directing secretion.

This is an uncharacterized protein from Caenorhabditis elegans.